A 264-amino-acid chain; its full sequence is 3-methyl-2-oxobutanoate hydroxymethyltransferase (264 aa).

Asp43 and Asp82 together coordinate Mg(2+). Residues 43 to 44 (DS), Asp82, and Lys111 contribute to the 3-methyl-2-oxobutanoate site. Glu113 is a binding site for Mg(2+). Glu180 (proton acceptor) is an active-site residue.

It belongs to the PanB family. Homodecamer; pentamer of dimers. Mg(2+) serves as cofactor.

It localises to the cytoplasm. The catalysed reaction is 3-methyl-2-oxobutanoate + (6R)-5,10-methylene-5,6,7,8-tetrahydrofolate + H2O = 2-dehydropantoate + (6S)-5,6,7,8-tetrahydrofolate. Its pathway is cofactor biosynthesis; (R)-pantothenate biosynthesis; (R)-pantoate from 3-methyl-2-oxobutanoate: step 1/2. Catalyzes the reversible reaction in which hydroxymethyl group from 5,10-methylenetetrahydrofolate is transferred onto alpha-ketoisovalerate to form ketopantoate. The polypeptide is 3-methyl-2-oxobutanoate hydroxymethyltransferase (Campylobacter fetus subsp. fetus (strain 82-40)).